Reading from the N-terminus, the 206-residue chain is Large ribosomal subunit protein uL4 (206 aa).

The tract at residues 63–93 (MYKQKGTGRARHHSARAPQFRGGGKAHGPVV) is disordered. Residues 64-77 (YKQKGTGRARHHSA) are compositionally biased toward basic residues.

It belongs to the universal ribosomal protein uL4 family. Part of the 50S ribosomal subunit.

Its function is as follows. One of the primary rRNA binding proteins, this protein initially binds near the 5'-end of the 23S rRNA. It is important during the early stages of 50S assembly. It makes multiple contacts with different domains of the 23S rRNA in the assembled 50S subunit and ribosome. Functionally, forms part of the polypeptide exit tunnel. This is Large ribosomal subunit protein uL4 from Sinorhizobium fredii (strain NBRC 101917 / NGR234).